The following is a 315-amino-acid chain: Methionyl-tRNA formyltransferase (315 aa).

113–116 (SLLP) lines the (6S)-5,6,7,8-tetrahydrofolate pocket.

It belongs to the Fmt family.

It carries out the reaction L-methionyl-tRNA(fMet) + (6R)-10-formyltetrahydrofolate = N-formyl-L-methionyl-tRNA(fMet) + (6S)-5,6,7,8-tetrahydrofolate + H(+). Functionally, attaches a formyl group to the free amino group of methionyl-tRNA(fMet). The formyl group appears to play a dual role in the initiator identity of N-formylmethionyl-tRNA by promoting its recognition by IF2 and preventing the misappropriation of this tRNA by the elongation apparatus. The protein is Methionyl-tRNA formyltransferase of Erwinia tasmaniensis (strain DSM 17950 / CFBP 7177 / CIP 109463 / NCPPB 4357 / Et1/99).